The sequence spans 491 residues: UDP-N-acetylmuramate--L-alanine ligase (491 aa).

Residue 126 to 132 (GTHGKTT) coordinates ATP.

Belongs to the MurCDEF family.

Its subcellular location is the cytoplasm. The enzyme catalyses UDP-N-acetyl-alpha-D-muramate + L-alanine + ATP = UDP-N-acetyl-alpha-D-muramoyl-L-alanine + ADP + phosphate + H(+). The protein operates within cell wall biogenesis; peptidoglycan biosynthesis. In terms of biological role, cell wall formation. The protein is UDP-N-acetylmuramate--L-alanine ligase of Escherichia coli O7:K1 (strain IAI39 / ExPEC).